The chain runs to 129 residues: Serum amyloid A-1 protein (129 aa).

Positions 1 to 18 are cleaved as a signal peptide; sequence MKLFTGLIFCSLVLGVSS. The important for amyloid formation stretch occupies residues 19-44; the sequence is QWYSFIGEAAQGAWDMYRAYSDMIEA. The disordered stretch occupies residues 92-129; the sequence is GDSGHGVEDSKADQAANEWGRSGKDPNHFRPPGLPDKY.

Belongs to the SAA family. As to quaternary structure, homohexamer; dimer of trimers. Can form amyloid fibrils after partial proteolysis; the native, undenatured protein does not form amyloid fibrils (in vitro). Apolipoprotein of the HDL complex. Binds to heparin. In terms of tissue distribution, detected in liver.

The protein localises to the secreted. Functionally, major acute phase protein. This is Serum amyloid A-1 protein (SAA1) from Neovison vison (American mink).